We begin with the raw amino-acid sequence, 122 residues long: Large ribosomal subunit protein uL14 (122 aa).

Belongs to the universal ribosomal protein uL14 family. In terms of assembly, part of the 50S ribosomal subunit. Forms a cluster with proteins L3 and L19. In the 70S ribosome, L14 and L19 interact and together make contacts with the 16S rRNA in bridges B5 and B8.

In terms of biological role, binds to 23S rRNA. Forms part of two intersubunit bridges in the 70S ribosome. This chain is Large ribosomal subunit protein uL14, found in Pediococcus pentosaceus (strain ATCC 25745 / CCUG 21536 / LMG 10740 / 183-1w).